The chain runs to 303 residues: N-acetyl-D-glucosamine kinase (303 aa).

Residues 4–11 (GFDVGGTK) and 133–140 (GFGGGLIY) contribute to the ATP site. Residues histidine 157, cysteine 177, cysteine 179, and cysteine 184 each contribute to the Zn(2+) site.

Belongs to the ROK (NagC/XylR) family. NagK subfamily.

It carries out the reaction N-acetyl-D-glucosamine + ATP = N-acetyl-D-glucosamine 6-phosphate + ADP + H(+). Its pathway is cell wall biogenesis; peptidoglycan recycling. In terms of biological role, catalyzes the phosphorylation of N-acetyl-D-glucosamine (GlcNAc) derived from cell-wall degradation, yielding GlcNAc-6-P. In Vibrio vulnificus (strain CMCP6), this protein is N-acetyl-D-glucosamine kinase.